The chain runs to 379 residues: LIM/homeobox protein Lhx9 (379 aa).

2 LIM zinc-binding domains span residues 51-112 (TLCA…RFSV) and 113-175 (QRCA…LVQG). 2 disordered regions span residues 232 to 257 (ENDTDLDRDQSYPPSQKTKRMRTSFK) and 310 to 379 (RQEN…TNLF). The span at 248–257 (KTKRMRTSFK) shows a compositional bias: basic residues. The segment at residues 249–308 (TKRMRTSFKHHQLRTTKSYFAINHNPDAKDLKQLAQKTGLTKRVLQVWFQNARAKFRRNL) is a DNA-binding region (homeobox). Residues 326-379 (APASTDSAALTPTGAASTLSDLTSPSLNVGASVTPNMDSHESGSPSQTTLTNLF) are compositionally biased toward polar residues.

As to expression, isoform 1 and isoform 3 are expressed in ovary, testis, brain and heart. Isoform 4 and isoform 5 are expressed in brain.

The protein resides in the nucleus. Its function is as follows. May be involved in gonadal development. The protein is LIM/homeobox protein Lhx9 (lhx9) of Glandirana rugosa (Japanese wrinkled frog).